The primary structure comprises 285 residues: Acetylglutamate kinase (285 aa).

Residues 55-56, arginine 77, and asparagine 171 each bind substrate; that span reads GG.

It belongs to the acetylglutamate kinase family. ArgB subfamily.

Its subcellular location is the cytoplasm. It carries out the reaction N-acetyl-L-glutamate + ATP = N-acetyl-L-glutamyl 5-phosphate + ADP. It functions in the pathway amino-acid biosynthesis; L-arginine biosynthesis; N(2)-acetyl-L-ornithine from L-glutamate: step 2/4. Functionally, catalyzes the ATP-dependent phosphorylation of N-acetyl-L-glutamate. This chain is Acetylglutamate kinase, found in Chlorobaculum tepidum (strain ATCC 49652 / DSM 12025 / NBRC 103806 / TLS) (Chlorobium tepidum).